The sequence spans 1081 residues: MTSKRPGGSSFQPEVKRKRESDEFEQCYVSRFENELPSVPTIDKTGWARPAVDKDLGISKSIACQILEVETYHEDGSATSYDRTNVKLYGVTKSGNSICVIVTDYFPHFYFQAPQGFGVEHIGTAQSAICNMVAAAKRRGGSGQAQLPGKVVDNLVHVEIVHGENLYYFRGADTKVPFVKVSGSTEALHKARMELKNGVNLMGKGPVNVGNLYESNINVIVMFLAKTNIVGCGWIEIPAGKCRILSNSEKSSRCQIEVTVPVKNLIVHESDGEWAGIAPIRTLSLDIECIGRRGVFPEAIKDPIIQIANLVKIEGEAEPFVRNCFVLGTCAPVVGSNIIQCVNEKVLLEKWAEFVREVDPDIITGYNILNFDLPYILDRAKVLSLPQVSHLGRQKEKGSVVRDAAISSKQMGSRVNKSIDIHGRIIFDVLQVVLRDYKLRSYTLNSVSYQFLSEQKEDVEHNIIPDLQRGDEQTRRRLAQYCLKDAYLPLRLLDKLMSIINYIEMARVTGVPMNFLLTKGQQIKILSMMLRRCKQNNFFLPVIEANSGDGEGYEGATVIDPIRGFYNEPIATLDFASLYPSIMIAHNLCYTTLLKSPQGVENEDYIRTPSGQYFATKSKRRGLLPEILEDILAARKRAKNDMKNEKDEFKRMVYNGRQLALKISANSVYGFTGATVGKLPCLEISQSVTAFGRKMIDMTKLEVERIYKKGALDGKCPADAKVIYGDTDSVMVKFGVETVAQAMEIGLDAAKEVSKIFTPPIKLEFEKVYSPYLLINKKRYAGLYFTKPDVHDKMDCKGLETVRRDNCPLVAKVLGVCLEKLLIERDQQSALDFAKRTISDLLCNKIDISLLIISKELTKSGDKYQAKQAHVELAARMKKRDAGSAPRLGDRVPYVFVAAAKNVPAYERAEDPTFVLQNNIPLDTKHYLTNQLAKPLARIFEPILGDRAEKILVEGEHTRVRTVVQSKVGGLAAFTTKSATCLGCKSVLPRAESENAVCKHCEPKLPTIFASRMNTMHELENHFGRLWTECQNCAKTMQDKVNCSARDCPIYYMREKVRNELSEASAVIERFGDPCFQAPTK.

The disordered stretch occupies residues 1–22; the sequence is MTSKRPGGSSFQPEVKRKRESD. Zn(2+)-binding residues include Cys-981, Cys-984, Cys-998, and Cys-1001. A CysA-type zinc finger spans residues 981–1001; sequence CLGCKSVLPRAESENAVCKHC. The [4Fe-4S] cluster site is built by Cys-1030, Cys-1033, Cys-1043, and Cys-1048. Positions 1030 to 1048 match the CysB motif motif; that stretch reads CQNCAKTMQDKVNCSARDC.

Belongs to the DNA polymerase type-B family. As to quaternary structure, heterodimer with subunits of 125 kDa and 50 kDa. The 125 kDa subunit contains the polymerase active site and most likely the active site for the 3'-5' exonuclease activity. [4Fe-4S] cluster is required as a cofactor.

Its subcellular location is the nucleus. The catalysed reaction is DNA(n) + a 2'-deoxyribonucleoside 5'-triphosphate = DNA(n+1) + diphosphate. Possesses two enzymatic activities: DNA synthesis (polymerase) and an exonucleolytic activity that degrades single stranded DNA in the 3'- to 5'-direction. Required with its accessory proteins (proliferating cell nuclear antigen (PCNA) and replication factor C (RFC) or activator 1) for leading strand synthesis. Also involved in completing Okazaki fragments initiated by the DNA polymerase alpha/primase complex. The sequence is that of DNA polymerase delta catalytic subunit from Caenorhabditis elegans.